Reading from the N-terminus, the 281-residue chain is Pantothenate synthetase (281 aa).

Position 30–37 (30–37) interacts with ATP; the sequence is MGNLHAGH. His37 acts as the Proton donor in catalysis. (R)-pantoate is bound at residue Gln61. Residue Gln61 participates in beta-alanine binding. 149-152 contacts ATP; the sequence is GRKD. Gln155 is a binding site for (R)-pantoate. ATP is bound by residues Val178 and 186–189; that span reads MSSR.

This sequence belongs to the pantothenate synthetase family. As to quaternary structure, homodimer.

The protein resides in the cytoplasm. The catalysed reaction is (R)-pantoate + beta-alanine + ATP = (R)-pantothenate + AMP + diphosphate + H(+). It functions in the pathway cofactor biosynthesis; (R)-pantothenate biosynthesis; (R)-pantothenate from (R)-pantoate and beta-alanine: step 1/1. Its function is as follows. Catalyzes the condensation of pantoate with beta-alanine in an ATP-dependent reaction via a pantoyl-adenylate intermediate. The polypeptide is Pantothenate synthetase (Shewanella amazonensis (strain ATCC BAA-1098 / SB2B)).